The following is a 246-amino-acid chain: MNILLSNDDGYHAEGIQTLATYLRKFANVVIVAPDRNRSAASSSLTLVEPLRPRQLDNRDYCINGTPADCVHLALNGFLSGRVDLVVSGINAGVNLGDDTLYSGTLAAALEGRHLGLPAIAVSLDGRQHYESAAKIVCDLIPKLHGQLLKSREILNINVPDLPYENLKGLKVCRLGHRSSAAEVIKQADPRGEAIYWIGPAGLPEDEAEGTDFHAVQQGYVSITPIQPDLTAHHSLRSLQTWLEQE.

A divalent metal cation is bound by residues Asp-8, Asp-9, Ser-39, and Asn-91.

It belongs to the SurE nucleotidase family. It depends on a divalent metal cation as a cofactor.

The protein localises to the cytoplasm. It carries out the reaction a ribonucleoside 5'-phosphate + H2O = a ribonucleoside + phosphate. Nucleotidase that shows phosphatase activity on nucleoside 5'-monophosphates. The polypeptide is 5'-nucleotidase SurE (Actinobacillus succinogenes (strain ATCC 55618 / DSM 22257 / CCUG 43843 / 130Z)).